The following is a 310-amino-acid chain: Malate dehydrogenase (310 aa).

Residues 7 to 13 and Asp-34 contribute to the NAD(+) site; that span reads GAAGGIG. The substrate site is built by Arg-81 and Arg-87. NAD(+)-binding positions include Asn-94 and 117–119; that span reads ITN. Asn-119 and Arg-153 together coordinate substrate. The active-site Proton acceptor is the His-177. Met-227 is an NAD(+) binding site.

It belongs to the LDH/MDH superfamily. MDH type 1 family. As to quaternary structure, homodimer.

It carries out the reaction (S)-malate + NAD(+) = oxaloacetate + NADH + H(+). Functionally, catalyzes the reversible oxidation of malate to oxaloacetate. The protein is Malate dehydrogenase of Vibrio vulnificus (strain CMCP6).